The chain runs to 223 residues: Deoxyribose-phosphate aldolase (223 aa).

The active-site Proton donor/acceptor is the Asp91. Residue Lys153 is the Schiff-base intermediate with acetaldehyde of the active site. Catalysis depends on Lys182, which acts as the Proton donor/acceptor.

The protein belongs to the DeoC/FbaB aldolase family. DeoC type 1 subfamily.

It localises to the cytoplasm. It catalyses the reaction 2-deoxy-D-ribose 5-phosphate = D-glyceraldehyde 3-phosphate + acetaldehyde. It participates in carbohydrate degradation; 2-deoxy-D-ribose 1-phosphate degradation; D-glyceraldehyde 3-phosphate and acetaldehyde from 2-deoxy-alpha-D-ribose 1-phosphate: step 2/2. Its function is as follows. Catalyzes a reversible aldol reaction between acetaldehyde and D-glyceraldehyde 3-phosphate to generate 2-deoxy-D-ribose 5-phosphate. This chain is Deoxyribose-phosphate aldolase, found in Yersinia enterocolitica serotype O:8 / biotype 1B (strain NCTC 13174 / 8081).